Here is a 473-residue protein sequence, read N- to C-terminus: Photosystem II CP43 reaction center protein (473 aa).

A propeptide spanning residues 1-14 (MKTLYSLRRFYPVE) is cleaved from the precursor. N-acetylthreonine is present on Thr15. Position 15 is a phosphothreonine (Thr15). The next 5 membrane-spanning stretches (helical) occupy residues 69-93 (LFEVAHFVPEKPMYEQGLILLPHLA), 134-155 (LLGPETLEESFPFFGYVWKDRN), 178-200 (KALYFGGVYDTWAPGGGDVRKIT), 255-275 (KPFAWARRALVWSGEAYLSYS), and 291-312 (WFNNTAYPSEFYGPTGPEASQA). Glu367 contributes to the [CaMn4O5] cluster binding site. Residues 447 to 471 (RARAAAAGFEKGIDRDFEPVLSMTP) form a helical membrane-spanning segment.

Belongs to the PsbB/PsbC family. PsbC subfamily. PSII is composed of 1 copy each of membrane proteins PsbA, PsbB, PsbC, PsbD, PsbE, PsbF, PsbH, PsbI, PsbJ, PsbK, PsbL, PsbM, PsbT, PsbX, PsbY, PsbZ, Psb30/Ycf12, at least 3 peripheral proteins of the oxygen-evolving complex and a large number of cofactors. It forms dimeric complexes. Binds multiple chlorophylls and provides some of the ligands for the Ca-4Mn-5O cluster of the oxygen-evolving complex. It may also provide a ligand for a Cl- that is required for oxygen evolution. PSII binds additional chlorophylls, carotenoids and specific lipids. is required as a cofactor.

The protein localises to the plastid. Its subcellular location is the chloroplast thylakoid membrane. One of the components of the core complex of photosystem II (PSII). It binds chlorophyll and helps catalyze the primary light-induced photochemical processes of PSII. PSII is a light-driven water:plastoquinone oxidoreductase, using light energy to abstract electrons from H(2)O, generating O(2) and a proton gradient subsequently used for ATP formation. The sequence is that of Photosystem II CP43 reaction center protein from Lactuca sativa (Garden lettuce).